The following is a 439-amino-acid chain: Na(+)/H(+) antiporter NhaA 1 (439 aa).

11 helical membrane passes run 14–34 (ITGG…ANLA), 60–80 (ISLH…FIGL), 98–118 (ALPL…YYFF), 127–147 (GWGI…AMVG), 156–176 (IFLS…IAIF), 179–199 (EQIF…LAVA), 213–233 (IGLI…TIAG), 303–323 (HPIS…GVIV), 335–355 (IVLG…FLFA), 375–395 (IIGT…ISDL), and 408–428 (VAVL…LISA).

This sequence belongs to the NhaA Na(+)/H(+) (TC 2.A.33) antiporter family.

It localises to the cell inner membrane. It catalyses the reaction Na(+)(in) + 2 H(+)(out) = Na(+)(out) + 2 H(+)(in). Functionally, na(+)/H(+) antiporter that extrudes sodium in exchange for external protons. The sequence is that of Na(+)/H(+) antiporter NhaA 1 from Psychromonas ingrahamii (strain DSM 17664 / CCUG 51855 / 37).